The following is a 388-amino-acid chain: N5-carboxyaminoimidazole ribonucleotide synthase (388 aa).

ATP contacts are provided by residues Lys-105, Lys-140, 174–177 (ESFV), Glu-182, and 267–268 (NE). One can recognise an ATP-grasp domain in the interval 109-297 (RHFLQNLGLP…QFALQLQAVT (189 aa)).

The protein belongs to the PurK/PurT family. As to quaternary structure, homodimer.

It catalyses the reaction 5-amino-1-(5-phospho-beta-D-ribosyl)imidazole + hydrogencarbonate + ATP = 5-carboxyamino-1-(5-phospho-D-ribosyl)imidazole + ADP + phosphate + 2 H(+). The protein operates within purine metabolism; IMP biosynthesis via de novo pathway; 5-amino-1-(5-phospho-D-ribosyl)imidazole-4-carboxylate from 5-amino-1-(5-phospho-D-ribosyl)imidazole (N5-CAIR route): step 1/2. Functionally, catalyzes the ATP-dependent conversion of 5-aminoimidazole ribonucleotide (AIR) and HCO(3)(-) to N5-carboxyaminoimidazole ribonucleotide (N5-CAIR). The polypeptide is N5-carboxyaminoimidazole ribonucleotide synthase (Synechocystis sp. (strain ATCC 27184 / PCC 6803 / Kazusa)).